The chain runs to 333 residues: UPF0284 protein TGAM_0534 (333 aa).

Belongs to the UPF0284 family.

The sequence is that of UPF0284 protein TGAM_0534 from Thermococcus gammatolerans (strain DSM 15229 / JCM 11827 / EJ3).